A 108-amino-acid polypeptide reads, in one-letter code: Complement inhibitor CirpT4 (108 aa).

Positions 1-19 (MRAFVALFCTLVAFATVIC) are cleaved as a signal peptide. 4 disulfides stabilise this stretch: Cys40-Cys64, Cys59-Cys98, Cys76-Cys99, and Cys85-Cys104.

This sequence belongs to the CirpT family. In terms of tissue distribution, expressed in salivary glands.

It localises to the secreted. Complement inhibitor. Prevents complement-mediated activation of C5 by sterically preventing direct binding of C5 to its convertase (binding with domains MG4 and MG5). Binds C5 at a different binding site than the other tick complement inhibitors OmCI and RaCI3, and the drug eculizumab. Inhibits the complement in human, rat and guinea pig, and also shows a reduced inhibition in rabbit and pig. The sequence is that of Complement inhibitor CirpT4 from Amblyomma americanum (Lone star tick).